A 207-amino-acid polypeptide reads, in one-letter code: Dephospho-CoA kinase (207 aa).

Residues 5-203 (AVGLTGGVAC…ARYRALASVF (199 aa)) enclose the DPCK domain. Residue 13–18 (ACGKSL) participates in ATP binding.

Belongs to the CoaE family.

It localises to the cytoplasm. It carries out the reaction 3'-dephospho-CoA + ATP = ADP + CoA + H(+). It functions in the pathway cofactor biosynthesis; coenzyme A biosynthesis; CoA from (R)-pantothenate: step 5/5. In terms of biological role, catalyzes the phosphorylation of the 3'-hydroxyl group of dephosphocoenzyme A to form coenzyme A. In Xylella fastidiosa (strain Temecula1 / ATCC 700964), this protein is Dephospho-CoA kinase.